The chain runs to 372 residues: Ligninase LG6 (372 aa).

A signal peptide spans 1–21 (MALKQLAAAVALALSIQAAQG). A propeptide spanning residues 22 to 28 (AAVKEKR) is cleaved from the precursor. 2 disulfide bridges follow: Cys31–Cys43 and Cys62–Cys148. His75 functions as the Proton acceptor in the catalytic mechanism. Asp76, Gly94, Asp96, and Ser98 together coordinate Ca(2+). His204 lines the heme b pocket. Ca(2+)-binding residues include Ser205, Asp222, Thr224, Val227, and Asp229. A disulfide bond links Cys277 and Cys345. N-linked (GlcNAc...) asparagine glycosylation occurs at Asn285. The span at 352–361 (TLTTLPGPET) shows a compositional bias: low complexity. The segment at 352–372 (TLTTLPGPETSVQRIQPPPGA) is disordered.

This sequence belongs to the peroxidase family. Ligninase subfamily. The cofactor is heme b. Ca(2+) serves as cofactor.

The enzyme catalyses 1-(3,4-dimethoxyphenyl)-2-(2-methoxyphenoxy)propane-1,3-diol + H2O2 = 3,4-dimethoxybenzaldehyde + guaiacol + glycolaldehyde + H2O. The catalysed reaction is 2 (3,4-dimethoxyphenyl)methanol + H2O2 = 2 (3,4-dimethoxyphenyl)methanol radical + 2 H2O. It functions in the pathway secondary metabolite metabolism; lignin degradation. In terms of biological role, depolymerization of lignin. Catalyzes the C(alpha)-C(beta) cleavage of the propyl side chains of lignin. This is Ligninase LG6 (GLG6) from Phanerodontia chrysosporium (White-rot fungus).